We begin with the raw amino-acid sequence, 200 residues long: 3-isopropylmalate dehydratase small subunit (200 aa).

Belongs to the LeuD family. LeuD type 1 subfamily. Heterodimer of LeuC and LeuD.

The enzyme catalyses (2R,3S)-3-isopropylmalate = (2S)-2-isopropylmalate. It participates in amino-acid biosynthesis; L-leucine biosynthesis; L-leucine from 3-methyl-2-oxobutanoate: step 2/4. Functionally, catalyzes the isomerization between 2-isopropylmalate and 3-isopropylmalate, via the formation of 2-isopropylmaleate. In Actinobacillus pleuropneumoniae serotype 3 (strain JL03), this protein is 3-isopropylmalate dehydratase small subunit.